Reading from the N-terminus, the 293-residue chain is Nucleotide-binding protein OB2468 (293 aa).

14 to 21 (GMSGAGKT) provides a ligand contact to ATP. 65–68 (DLRG) contributes to the GTP binding site.

It belongs to the RapZ-like family.

Functionally, displays ATPase and GTPase activities. The polypeptide is Nucleotide-binding protein OB2468 (Oceanobacillus iheyensis (strain DSM 14371 / CIP 107618 / JCM 11309 / KCTC 3954 / HTE831)).